The primary structure comprises 560 residues: RNA polymerase-associated protein C651.09c (560 aa).

2 disordered regions span residues 15–74 (DDSD…KNPY) and 128–207 (YMAQ…KVEQ). A compositionally biased stretch (basic and acidic residues) spans 148–171 (GKRDKLTELKKRRQERSARSVSER). Over residues 180–195 (DYEEQNESEKSEEEEG) the composition is skewed to acidic residues. Position 197 is a phosphoserine (S197). Residues 214–345 (SANLYDLNAI…KLNDLRDMSK (132 aa)) form the Plus3 domain. A coiled-coil region spans residues 387–456 (AGNAELVKEI…RRRLSAAATA (70 aa)). Residues 440 to 449 (EQRMNEERRR) are compositionally biased toward basic and acidic residues. Positions 440–486 (EQRMNEERRRLSAAATATPMSAPTSVLTGTSPQPSPSLSTSIMSTPK) are disordered. Positions 451–480 (SAAATATPMSAPTSVLTGTSPQPSPSLSTS) are enriched in low complexity. Phosphoserine is present on residues S502 and S506.

Component of the PAF1 complex.

The protein resides in the nucleus. Its subcellular location is the nucleoplasm. Its function is as follows. The PAF1 complex is a multifunctional complex. Involved in transcription initiation via genetic interactions with TATA-binding proteins. Involved in elongation. Also has a role in transcription-coupled histone modification. Important for TATA site selection by TBP. Directly or indirectly regulates the DNA-binding properties of the TATA box-binding protein, and the relative activities of different TATA elements. The sequence is that of RNA polymerase-associated protein C651.09c from Schizosaccharomyces pombe (strain 972 / ATCC 24843) (Fission yeast).